A 424-amino-acid chain; its full sequence is Trigger factor (424 aa).

The PPIase FKBP-type domain occupies 163–248; sequence GDTVVLDFEG…IHEIKAKELP (86 aa).

This sequence belongs to the FKBP-type PPIase family. Tig subfamily.

It is found in the cytoplasm. It catalyses the reaction [protein]-peptidylproline (omega=180) = [protein]-peptidylproline (omega=0). Involved in protein export. Acts as a chaperone by maintaining the newly synthesized protein in an open conformation. Functions as a peptidyl-prolyl cis-trans isomerase. The chain is Trigger factor from Bacillus pumilus (strain SAFR-032).